Here is a 722-residue protein sequence, read N- to C-terminus: Polyribonucleotide nucleotidyltransferase (722 aa).

Mg(2+) contacts are provided by D486 and D492. The KH domain maps to 553–612 (PKIVQLQIDIDKISLVIGSTGKTVKAITDEFEVKVQIEQNGKIILFGDDDFKMQKAKERI). The 96-residue stretch at 622-717 (GEIYEGTVKK…KFGKIDLEIV (96 aa)) folds into the S1 motif domain.

This sequence belongs to the polyribonucleotide nucleotidyltransferase family. Mg(2+) is required as a cofactor.

The protein localises to the cytoplasm. It carries out the reaction RNA(n+1) + phosphate = RNA(n) + a ribonucleoside 5'-diphosphate. Involved in mRNA degradation. Catalyzes the phosphorolysis of single-stranded polyribonucleotides processively in the 3'- to 5'-direction. In Borreliella burgdorferi (strain ZS7) (Borrelia burgdorferi), this protein is Polyribonucleotide nucleotidyltransferase.